Here is a 292-residue protein sequence, read N- to C-terminus: Peroxisomal 2,4-dienoyl-CoA reductase [(3E)-enoyl-CoA-producing] (292 aa).

A2 carries the N-acetylalanine modification. NADP(+)-binding positions include 35-40 (GGGSGI), 60-64 (RSLPR), and D86. Position 60 (R60) interacts with substrate. Residues R88, F118, and 126–128 (SFN) contribute to the substrate site. N6-acetyllysine is present on K151. NADP(+) contacts are provided by residues K182 and 208–214 (PGPISGT). Substrate is bound at residue R219. At S287 the chain carries Phosphoserine. The short motif at 290 to 292 (AKL) is the Microbody targeting signal element. At K291 the chain carries N6-acetyllysine.

It belongs to the short-chain dehydrogenases/reductases (SDR) family. 2,4-dienoyl-CoA reductase subfamily. In terms of assembly, monomer, dimer and oligomer.

It localises to the peroxisome. It carries out the reaction a (2E,4Z)-dienoyl-CoA + NADPH + H(+) = a 4,5-saturated-(3E)-enoyl-CoA + NADP(+). The catalysed reaction is a (2E,4E)-dienoyl-CoA + NADPH + H(+) = a 4,5-saturated-(3E)-enoyl-CoA + NADP(+). The enzyme catalyses (2E,4E)-hexadienoyl-CoA + NADPH + H(+) = (3E)-hexenoyl-CoA + NADP(+). It catalyses the reaction (2E,4E)-decadienoyl-CoA + NADPH + H(+) = (3E)-decenoyl-CoA + NADP(+). It carries out the reaction (2E,4Z,7Z,10Z,13Z,16Z,19Z)-docosaheptaenoyl-CoA + NADPH + H(+) = (3E,7Z,10Z,13Z,16Z,19Z)-docosahexaenoyl-CoA + NADP(+). Functionally, auxiliary enzyme of beta-oxidation. Participates in the degradation of unsaturated fatty enoyl-CoA esters having double bonds in both even- and odd-numbered positions in peroxisome. Catalyzes the NADP-dependent reduction of 2,4-dienoyl-CoA to yield trans-3-enoyl-CoA. Has activity towards short and medium chain 2,4-dienoyl-CoAs, but also towards 2,4,7,10,13,16,19-docosaheptaenoyl-CoA, suggesting that it does not constitute a rate limiting step in the peroxisomal degradation of docosahexaenoic acid. The chain is Peroxisomal 2,4-dienoyl-CoA reductase [(3E)-enoyl-CoA-producing] (DECR2) from Pongo abelii (Sumatran orangutan).